The primary structure comprises 290 residues: ATP synthase subunit a (290 aa).

The next 6 membrane-spanning stretches (helical) occupy residues 44-64, 104-124, 161-181, 194-214, 233-253, and 260-280; these read AFHV…ILLF, VIAP…AIDL, LSVF…GGFI, ILVQ…TLVA, VFIL…GMGV, and AVFH…LTIV.

Belongs to the ATPase A chain family. In terms of assembly, F-type ATPases have 2 components, CF(1) - the catalytic core - and CF(0) - the membrane proton channel. CF(1) has five subunits: alpha(3), beta(3), gamma(1), delta(1), epsilon(1). CF(0) has three main subunits: a(1), b(2) and c(9-12). The alpha and beta chains form an alternating ring which encloses part of the gamma chain. CF(1) is attached to CF(0) by a central stalk formed by the gamma and epsilon chains, while a peripheral stalk is formed by the delta and b chains.

The protein resides in the cell inner membrane. Its function is as follows. Key component of the proton channel; it plays a direct role in the translocation of protons across the membrane. This chain is ATP synthase subunit a, found in Pseudomonas fluorescens (strain ATCC BAA-477 / NRRL B-23932 / Pf-5).